The primary structure comprises 284 residues: MSARDSDHLNGQCFPHPGIGHGTVVTVRITVLGCSGSVVGPDSPASGYLLRAPDTPPLVLDFGGGVLGALQRHADPGSVHVLLSHLHADHCLDMPGLFVWRRYHPTRPVGKALLYGPDDTWLRLGAASSPYGGEIDDCSDIFDVRHWVDGEPVPLGALMIMPRLVAHPTESYGLRITDPSGASLVYSGDTGSCDQLVELARGADVFLCEASWTHSPDRPPNLHLSGTEAGRAAAQASVRELLLTHIPPWTSREDVISEAKAEFDGPVHAVVSGETFDIQAPERV.

This sequence belongs to the AtsA family.

This is an uncharacterized protein from Mycobacterium leprae (strain TN).